Reading from the N-terminus, the 309-residue chain is Isethionate sulfite-lyase activating enzyme (309 aa).

The Radical SAM core domain maps to 22–309 (HDGPGIRTVV…VVAAEHATDG (288 aa)). The [4Fe-4S] cluster site is built by C36, C40, C43, C62, C68, C71, C75, C95, C98, C102, and C106. An S-adenosyl-L-methionine-binding site is contributed by 42–44 (WCS). 4Fe-4S ferredoxin-type domains lie at 53 to 85 (IELA…RADD) and 86 to 117 (DTIS…YGTT). S-adenosyl-L-methionine is bound by residues G146, 195–197 (DIK), and H268.

Belongs to the organic radical-activating enzymes family. In terms of assembly, monomer. Requires [4Fe-4S] cluster as cofactor.

The catalysed reaction is glycyl-[protein] + reduced [flavodoxin] + S-adenosyl-L-methionine = glycin-2-yl radical-[protein] + semiquinone [flavodoxin] + 5'-deoxyadenosine + L-methionine + H(+). Its pathway is organosulfur degradation; alkanesulfonate degradation. In terms of biological role, involved in an anaerobic respiration pathway that converts the sulfonate isethionate (2-hydroxyethanesulfonate) to ammonia, acetate and sulfide. Catalyzes activation of the isethionate sulfite-lyase IslA under anaerobic conditions by generation of an organic free radical on a glycine residue, via a homolytic cleavage of S-adenosyl-L-methionine (SAM). The sequence is that of Isethionate sulfite-lyase activating enzyme from Oleidesulfovibrio alaskensis (strain ATCC BAA-1058 / DSM 17464 / G20) (Desulfovibrio alaskensis).